The sequence spans 404 residues: Demethylphylloquinone reductase NdbB (404 aa).

Residue 7-43 participates in FAD binding; sequence RICILGGGFGGLYTALRLGQLSWEGHTPPEIVLVDQR. NADP(+) is bound at residue 159–195; it reads IRIAIVGGGYSGVELAAKLGDRLGERGRIRIIERGKE.

It belongs to the NADH dehydrogenase family. FAD is required as a cofactor.

The catalysed reaction is demethylphylloquinone + NADPH + H(+) = demethylphylloquinol + NADP(+). The protein operates within cofactor biosynthesis; phylloquinone biosynthesis. With respect to regulation, inhibited by dicumarol. Its function is as follows. Bifunctional oxidoreductase probably ables to act both on prenyl naphthoquinones and on prenyl benzoquinones. Catalyzes the penultimate step in the biosynthesis of vitamin K1. The polypeptide is Demethylphylloquinone reductase NdbB (Synechocystis sp. (strain ATCC 27184 / PCC 6803 / Kazusa)).